The following is an 855-amino-acid chain: Nuclear valosin-containing protein-like (855 aa).

An interaction with RPL5 region spans residues 1 to 219 (MKPRPGVFVD…SLLESDKKRK (219 aa)). The Nucleolar localization signal signature appears at 49–52 (RRKR). K70 is modified (N6-acetyllysine). Residues 83-234 (LAKRARQDEE…KGNKRKTENL (152 aa)) form a disordered region. The short motif at 85-88 (KRAR) is the Nuclear localization signal element. Residues 90–110 (DEEDEYTESYSDDDSNMEDYP) are compositionally biased toward acidic residues. Composition is skewed to polar residues over residues 113-123 (QSANPMNSSLL) and 131-157 (SESV…SKTG). Position 133 is a phosphoserine (S133). T137 is modified (phosphothreonine). K155 is modified (N6-acetyllysine). At S190 the chain carries Phosphoserine. K207 is covalently cross-linked (Glycyl lysine isopeptide (Lys-Gly) (interchain with G-Cter in SUMO2)). Residues S210 and S214 each carry the phosphoserine modification. Basic residues predominate over residues 217-228 (KRKGRAKGKGNK). The short motif at 217–231 (KRKGRAKGKGNKRKT) is the Nuclear localization signal element. The interaction with WDR74 stretch occupies residues 266–473 (VGGNDATLKE…LTPGFVGADL (208 aa)). Position 304-311 (304-311 (GPPGCGKT)) interacts with ATP. Residues 496 to 523 (QKKKPEIEGLPSEGDQEERLGAEPTSET) are disordered. ATP is bound at residue 621–628 (GPPGCGKT).

It belongs to the AAA ATPase family. As to quaternary structure, interacts with NCL/nucleolin. Isoform 1 and isoform 2 interact with TERT and isoform 1 exhibits a higher binding affinity for TERT compared to isoform 2. Isoform 1 interacts with MTREX in an ATP-dependent manner; the interaction is required to associate NVL with nuclear RNA exosome. Isoform 1 interacts with RPL5 in an ATP-dependent manner. Interacts with WDR74 (through WDR repeats); the interaction is independent of RNA or pre-60S ribosome particles.

It localises to the nucleus. Its subcellular location is the nucleolus. It is found in the nucleoplasm. In terms of biological role, participates in the assembly of the telomerase holoenzyme and effecting of telomerase activity via its interaction with TERT. Involved in both early and late stages of the pre-rRNA processing pathways. Spatiotemporally regulates 60S ribosomal subunit biogenesis in the nucleolus. Catalyzes the release of specific assembly factors, such as WDR74, from pre-60S ribosomal particles through the ATPase activity. The chain is Nuclear valosin-containing protein-like from Mus musculus (Mouse).